We begin with the raw amino-acid sequence, 360 residues long: Serine/threonine-protein phosphatase 2A activator 2 (360 aa).

The protein belongs to the PTPA-type PPIase family.

Its subcellular location is the cytoplasm. The catalysed reaction is [protein]-peptidylproline (omega=180) = [protein]-peptidylproline (omega=0). In terms of biological role, PPIases accelerate the folding of proteins. It catalyzes the cis-trans isomerization of proline imidic peptide bonds in oligopeptides. Acts as a regulatory subunit for PP2A-like phosphatases modulating their activity or substrate specificity, probably by inducing a conformational change in the catalytic subunit, a direct target of the PPIase. Can reactivate inactive phosphatase PP2A-phosphatase methylesterase complexes (PP2Ai) in presence of ATP and Mg(2+) by dissociating the inactive form from the complex. The chain is Serine/threonine-protein phosphatase 2A activator 2 (RRD2) from Kluyveromyces lactis (strain ATCC 8585 / CBS 2359 / DSM 70799 / NBRC 1267 / NRRL Y-1140 / WM37) (Yeast).